Here is a 208-residue protein sequence, read N- to C-terminus: Small ribosomal subunit protein uS4 (208 aa).

In terms of domain architecture, S4 RNA-binding spans Arg98–Asp159.

The protein belongs to the universal ribosomal protein uS4 family. Part of the 30S ribosomal subunit. Contacts protein S5. The interaction surface between S4 and S5 is involved in control of translational fidelity.

Its function is as follows. One of the primary rRNA binding proteins, it binds directly to 16S rRNA where it nucleates assembly of the body of the 30S subunit. With S5 and S12 plays an important role in translational accuracy. The sequence is that of Small ribosomal subunit protein uS4 from Pelobacter propionicus (strain DSM 2379 / NBRC 103807 / OttBd1).